The primary structure comprises 435 residues: Cytidine monophosphate-N-acetylneuraminic acid hydroxylase (435 aa).

This sequence belongs to the CMP-Neu5Ac hydroxylase family. It depends on [2Fe-2S] cluster as a cofactor.

The protein resides in the cytoplasm. It carries out the reaction CMP-N-acetyl-beta-neuraminate + 2 Fe(II)-[cytochrome b5] + O2 + 2 H(+) = CMP-N-glycoloyl-beta-neuraminate + 2 Fe(III)-[cytochrome b5] + H2O. It functions in the pathway amino-sugar metabolism; N-acetylneuraminate metabolism. Functionally, sialic acids are components of carbohydrate chains of glycoconjugates and are involved in cell-cell recognition and cell-pathogen interactions. Catalyzes the conversion of CMP-N-acetylneuraminic acid (CMP-Neu5Ac) into its hydroxylated derivative CMP-N-glycolylneuraminic acid (CMP-Neu5Gc), a sialic acid abundantly expressed at the surface of many cells. The polypeptide is Cytidine monophosphate-N-acetylneuraminic acid hydroxylase (Sus scrofa (Pig)).